An 84-amino-acid chain; its full sequence is Turripeptide IX-03 (84 aa).

The first 21 residues, M1–A21, serve as a signal peptide directing secretion. Residues T22–N39 constitute a propeptide that is removed on maturation. Intrachain disulfides connect C48-C70, C55-C74, and C60-C81.

In terms of tissue distribution, expressed by the venom duct.

The protein resides in the secreted. The protein is Turripeptide IX-03 of Gemmula speciosa (Splendid gem-turris).